The primary structure comprises 267 residues: MSTYNWDEKHILTFPEEKVALSTKDVHVYYGKNESIKGIDMQFERNKITALIGPSGSGKSTYLRSLNRMNDTIDIAKVTGQILYRGIDVNRPEINVYEMRKHIGMVFQRPNPFAKSIYRNITFAHERAGVKDKQVLDEIVETSLRQAALWDQVKDDLHKSALTLSGGQQQRLCIARAISVKPDILLMDEPASALDPIATMQLEETMFELKKNFTIIIVTHNMQQAARASDYTGFFYLGDLIEYDKTATIFQNAKLQSTNDYVSGHFG.

Residues Leu-21–Val-262 form the ABC transporter domain. ATP is bound at residue Gly-53 to Ser-60.

This sequence belongs to the ABC transporter superfamily. Phosphate importer (TC 3.A.1.7) family. In terms of assembly, the complex is composed of two ATP-binding proteins (PstB), two transmembrane proteins (PstC and PstA) and a solute-binding protein (PstS).

It is found in the cell membrane. It carries out the reaction phosphate(out) + ATP + H2O = ADP + 2 phosphate(in) + H(+). Its function is as follows. Part of the ABC transporter complex PstSACB involved in phosphate import. Responsible for energy coupling to the transport system. The chain is Phosphate import ATP-binding protein PstB 2 from Streptococcus pneumoniae serotype 4 (strain ATCC BAA-334 / TIGR4).